The primary structure comprises 481 residues: Pentatricopeptide repeat-containing protein At2g48000 (481 aa).

PPR repeat units follow at residues 147–181 (TTSVYNALMGAYLCNGLSHHCEQLFLDFNSQQDGP), 187–221 (SVSTYNILISLYGRLIMVERMESVFLQLQQLNILP), 222–256 (DSSTYNNLIAGYIYAWDWDKMEATFHSMKNGLVKP), 257–287 (TLATYLLMLRGYANSGNLLRMEDMYQAVKRH), 292–324 (EIKLIESMICAYYRSCHKDRIRKIKTLSKLIPK), 328–362 (KPWLYLLLMQVYAKDDNLHAMENFIDQAITKGLQI), 364–398 (TDGIMRSIVASYFRCNAVDKLAKFVQRANSAGWKM), 399–433 (SRSMFHGLMIMYGSQKRFKEMENVLSEMESFKISR), and 434–469 (SKKTLCILLRVYAATHGQEHKVNQVAGMMLKHGHDF).

Belongs to the PPR family. P subfamily.

This chain is Pentatricopeptide repeat-containing protein At2g48000, found in Arabidopsis thaliana (Mouse-ear cress).